Here is an 80-residue protein sequence, read N- to C-terminus: Raniseptin-8 (80 aa).

The signal sequence occupies residues methionine 1 to cysteine 22. Positions glutamate 23 to glutamate 49 are excised as a propeptide. Residues arginine 27 to glutamate 46 form a disordered region. The segment covering glutamate 30–glutamate 44 has biased composition (acidic residues).

It belongs to the frog skin active peptide (FSAP) family. Dermaseptin subfamily. In terms of tissue distribution, expressed by the skin glands.

Its subcellular location is the secreted. Its function is as follows. Has antibacterial activity. The chain is Raniseptin-8 from Boana raniceps (Chaco tree frog).